Reading from the N-terminus, the 312-residue chain is Borealin-2 (312 aa).

Over residues 1–10 (MPPRKAPAKR) the composition is skewed to basic residues. The tract at residues 1–26 (MPPRKAPAKRRSTDSGVERDRGALSQ) is disordered. Positions 11-26 (RSTDSGVERDRGALSQ) are enriched in basic and acidic residues.

It belongs to the borealin family. As to quaternary structure, component of the CPC complex.

The protein resides in the nucleus. It localises to the chromosome. Its subcellular location is the centromere. Component of the chromosomal passenger complex (CPC), a complex that acts as a key regulator of mitosis. The CPC complex has essential functions at the centromere in ensuring correct chromosome alignment and segregation and is required for chromatin-induced microtubule stabilization and spindle assembly. The chain is Borealin-2 from Gallus gallus (Chicken).